The sequence spans 423 residues: MLDIKKIRADFDGIAAKLATRGVEKEKLEKLHDLDIKRRELIVKSEALKAERNSVSDEISQVKRAKGDASTQIAAMQKVSAEIKAIDAELAEIEENLNEIIIMLPNLPHESTPIGADEDDNVEVRRVGQTPTFNFEPKAHWDLGEDLGILDWERGGKVTGSRFLFYKGAGARLERALYNFMLDEHGKEGYTEMITPYMVNQESMFGTGQYPKFKEDTFELKDDRGFVLIPTAEVPLTNYYRGEILDGSELPIKFTAMSPSFRSEAGSAGRDTRGLIRLHQFHKVEMVKFAKPDQSYDELEKMTANAENILQKLGLAYRVVALSTGDMGFSAAKTYDLEVWIPAQNTYREISSCSNCEDFQARRAQIRYRDEDGKVQLLHTLNGSGLAVGRTVAAILENYQNEDGSITVPEILRPYMGGLEVIK.

L-serine is bound at residue 231–233 (TAE). 262-264 (RSE) serves as a coordination point for ATP. Glu285 provides a ligand contact to L-serine. ATP is bound at residue 349 to 352 (EISS). Ser384 serves as a coordination point for L-serine.

The protein belongs to the class-II aminoacyl-tRNA synthetase family. Type-1 seryl-tRNA synthetase subfamily. In terms of assembly, homodimer. The tRNA molecule binds across the dimer.

The protein localises to the cytoplasm. The catalysed reaction is tRNA(Ser) + L-serine + ATP = L-seryl-tRNA(Ser) + AMP + diphosphate + H(+). The enzyme catalyses tRNA(Sec) + L-serine + ATP = L-seryl-tRNA(Sec) + AMP + diphosphate + H(+). The protein operates within aminoacyl-tRNA biosynthesis; selenocysteinyl-tRNA(Sec) biosynthesis; L-seryl-tRNA(Sec) from L-serine and tRNA(Sec): step 1/1. Catalyzes the attachment of serine to tRNA(Ser). Is also able to aminoacylate tRNA(Sec) with serine, to form the misacylated tRNA L-seryl-tRNA(Sec), which will be further converted into selenocysteinyl-tRNA(Sec). This chain is Serine--tRNA ligase, found in Lactococcus lactis subsp. cremoris (strain SK11).